The sequence spans 587 residues: Cyclic GMP-AMP synthase-like receptor (587 aa).

Disordered regions lie at residues 26-48 and 77-229; these read IHPS…RRDD and TRMH…DRPL. 3 stretches are compositionally biased toward basic and acidic residues: residues 95 to 138, 150 to 185, and 204 to 228; these read TRDR…RDSL, DGAR…RESL, and PESR…HDRP. Mg(2+) is bound by residues E307, D309, and D409.

It belongs to the mab-21 family. Requires Mg(2+) as cofactor. The cofactor is Mn(2+).

The catalysed reaction is UTP + ATP = 2',3'-cUAMP + 2 diphosphate. Its function is as follows. Nucleotidyltransferase that catalyzes the formation of cyclic UMP-AMP (2',3'-cUAMP) from ATP and UTP and plays a key role in innate immunity. Acts as a key sensor of double-stranded DNA (dsDNA), the presence of dsDNA in the cytoplasm being a danger signal that triggers the immune responses. Directly binds dsDNA, activating the nucleotidyltransferase activity, leading to synthesis of 2',3'-cUAMP, a second messenger that binds to and activates Sting, thereby triggering the immune response via activation of the NF-kappa-B transcription factor. The chain is Cyclic GMP-AMP synthase-like receptor from Magallana gigas (Pacific oyster).